The sequence spans 85 residues: Neurtoxin 10 (85 aa).

The first 23 residues, 1–23, serve as a signal peptide directing secretion; the sequence is MKFCVAVSLLIIASMAGVISVSG. In terms of domain architecture, LCN-type CS-alpha/beta spans 24 to 85; that stretch reads YDVYPRDYAE…NFLSVIWKHC (62 aa). 3 cysteine pairs are disulfide-bonded: Cys-38–Cys-60, Cys-46–Cys-65, and Cys-50–Cys-67.

This sequence belongs to the long (3 C-C) scorpion toxin superfamily. As to expression, expressed by the venom gland.

Its subcellular location is the secreted. This is Neurtoxin 10 from Lychas mucronatus (Chinese swimming scorpion).